The primary structure comprises 339 residues: Vomeronasal type-1 receptor A14 (339 aa).

At 1–42 (MMGVQICQGMMSEIPFFSPPPQFSYMMNKNIRLHTDSNIRNT) the chain is on the extracellular side. Residues 43–63 (FFTDIGIGISANSLLLLFNIF) form a helical membrane-spanning segment. Over 64–75 (KLTRGQRSRLTD) the chain is Cytoplasmic. A helical transmembrane segment spans residues 76–96 (LPIGLLSLINLLMLLMAAFIA). Over 97–119 (TDTFISWKGWDDIICKFLVYLYR) the chain is Extracellular. A disulfide bridge links Cys-111 with Cys-198. The chain crosses the membrane as a helical span at residues 120–140 (TFRGLSLCTSCLLSVLQAIIL). Residues 141–160 (SPRSSCLAKFKHKPPHHISC) are Cytoplasmic-facing. The helical transmembrane segment at 161-181 (AILSLSVLYMFIGSHLLVSII) threads the bilayer. Residues 182–213 (ATPNLTTNDFIHVTQSCSILPMSYLMQCMFST) lie on the Extracellular side of the membrane. Residue Asn-185 is glycosylated (N-linked (GlcNAc...) asparagine). A helical transmembrane segment spans residues 214 to 234 (LLAIRDVFLISLMVLSTWYMV). Over 235-264 (ALLCRHRKQTRHLQGTSLSPKASPEQRATR) the chain is Cytoplasmic. A helical transmembrane segment spans residues 265 to 285 (SILMLMSLFVLMSVFDSIVCS). Residues 286-296 (SRTMYLNDPIS) are Extracellular-facing. A helical membrane pass occupies residues 297-317 (YSIQLFMVHIYATVSPFVFIV). At 318–339 (TEKHIVNFLRSVCEGDECLNIH) the chain is on the cytoplasmic side.

Belongs to the G-protein coupled receptor 1 family.

The protein localises to the cell membrane. Its function is as follows. Putative pheromone receptor implicated in the regulation of social as well as reproductive behavior. This is Vomeronasal type-1 receptor A14 from Rattus norvegicus (Rat).